The chain runs to 315 residues: Neuroguidin (315 aa).

Disordered stretches follow at residues 127–201 (SEND…KQKR) and 289–315 (VQDIGNPKPKKKKIIKKGKKKVFRKRK). Basic and acidic residues-rich tracts occupy residues 159–168 (KTKEQKEPSG) and 182–200 (YDGDLTEADRQKERVEKQK). A coiled-coil region spans residues 181–206 (HYDGDLTEADRQKERVEKQKRAALRS). The span at 296–315 (KPKKKKIIKKGKKKVFRKRK) shows a compositional bias: basic residues.

Belongs to the SAS10 family. In terms of assembly, part of the small subunit (SSU) processome, composed of more than 70 proteins and the RNA chaperone small nucleolar RNA (snoRNA) U3.

Its subcellular location is the nucleus. It localises to the nucleolus. The protein localises to the chromosome. It is found in the centromere. The protein resides in the cytoplasm. Its subcellular location is the cell projection. It localises to the axon. The protein localises to the dendrite. It is found in the filopodium. In terms of biological role, part of the small subunit (SSU) processome, first precursor of the small eukaryotic ribosomal subunit. During the assembly of the SSU processome in the nucleolus, many ribosome biogenesis factors, an RNA chaperone and ribosomal proteins associate with the nascent pre-rRNA and work in concert to generate RNA folding, modifications, rearrangements and cleavage as well as targeted degradation of pre-ribosomal RNA by the RNA exosome. Its dissociation from the complex determines the transition from state pre-A1 to state pre-A1*. May inhibit mRNA translation. This Danio rerio (Zebrafish) protein is Neuroguidin (ngdn).